A 655-amino-acid chain; its full sequence is Alpha-L-iduronidase (655 aa).

Positions 1 to 25 (MRPPGPRAPGLALLAALLAAPRALA) are cleaved as a signal peptide. Alpha-D-mannopyranose is bound by residues Pro53, Leu55, and His57. An alpha-L-iduronate-binding site is contributed by His90. Asn109 carries an N-linked (GlcNAc...) asparagine glycan. Alpha-L-iduronate contacts are provided by Asn180 and Glu181. Glu181 acts as the Proton donor in catalysis. 2 N-linked (GlcNAc...) asparagine glycosylation sites follow: Asn189 and Asn242. The alpha-L-iduronate site is built by Lys263, Glu298, and Gly304. Residue Glu298 is the Nucleophile of the active site. An alpha-D-mannopyranose-binding site is contributed by Trp305. N-linked (GlcNAc...) asparagine glycosylation occurs at Asn335. Alpha-L-iduronate-binding residues include Asp348 and Arg362. 2 N-linked (GlcNAc...) asparagine glycosylation sites follow: Asn371 and Asn414. Cys540 and Cys576 form a disulfide bridge.

The protein belongs to the glycosyl hydrolase 39 family. In terms of assembly, monomer. In terms of processing, a smaller 63 kDa protein probably arises from IDUA protein by proteolytic cleavage. N-glycosylation contributes to substrate binding and is required for full enzymatic activity. As to expression, detected in testis (at protein level). Expressed ubiquitously.

Its subcellular location is the lysosome. It carries out the reaction Hydrolysis of unsulfated alpha-L-iduronosidic linkages in dermatan sulfate.. In Canis lupus familiaris (Dog), this protein is Alpha-L-iduronidase (IDUA).